A 380-amino-acid polypeptide reads, in one-letter code: Carbamoyl phosphate synthase small chain (380 aa).

The segment at 1–187 (MTTSTRGAAK…VVPAIGAKRF (187 aa)) is CPSase. Positions 55, 236, and 238 each coordinate L-glutamine. A Glutamine amidotransferase type-1 domain is found at 188-380 (TVAAVDLGIK…FVSLMEGQRA (193 aa)). Cys-264 serves as the catalytic Nucleophile. L-glutamine contacts are provided by Phe-265, Gln-268, Asn-306, Gly-308, and Phe-309. Residues His-354 and Glu-356 contribute to the active site.

Belongs to the CarA family. Composed of two chains; the small (or glutamine) chain promotes the hydrolysis of glutamine to ammonia, which is used by the large (or ammonia) chain to synthesize carbamoyl phosphate. Tetramer of heterodimers (alpha,beta)4.

The catalysed reaction is hydrogencarbonate + L-glutamine + 2 ATP + H2O = carbamoyl phosphate + L-glutamate + 2 ADP + phosphate + 2 H(+). It catalyses the reaction L-glutamine + H2O = L-glutamate + NH4(+). The protein operates within amino-acid biosynthesis; L-arginine biosynthesis; carbamoyl phosphate from bicarbonate: step 1/1. It functions in the pathway pyrimidine metabolism; UMP biosynthesis via de novo pathway; (S)-dihydroorotate from bicarbonate: step 1/3. Its function is as follows. Small subunit of the glutamine-dependent carbamoyl phosphate synthetase (CPSase). CPSase catalyzes the formation of carbamoyl phosphate from the ammonia moiety of glutamine, carbonate, and phosphate donated by ATP, constituting the first step of 2 biosynthetic pathways, one leading to arginine and/or urea and the other to pyrimidine nucleotides. The small subunit (glutamine amidotransferase) binds and cleaves glutamine to supply the large subunit with the substrate ammonia. The protein is Carbamoyl phosphate synthase small chain of Streptomyces avermitilis (strain ATCC 31267 / DSM 46492 / JCM 5070 / NBRC 14893 / NCIMB 12804 / NRRL 8165 / MA-4680).